The sequence spans 292 residues: uncharacterized protein (292 aa).

4 helical membrane passes run 17-37, 135-155, 166-186, and 216-236; these read LFYT…FPAL, LIAV…IGQL, TTLW…YDIV, and FHGV…TALY. Residues 267–292 form a disordered region; sequence EKSEDKKSIVTSRIEEENEDEISDYE. The span at 282 to 292 shows a compositional bias: acidic residues; it reads EENEDEISDYE.

The protein localises to the membrane. This is an uncharacterized protein from Caenorhabditis elegans.